The chain runs to 342 residues: Anthranilate phosphoribosyltransferase (342 aa).

5-phospho-alpha-D-ribose 1-diphosphate contacts are provided by residues Gly79, 82-83 (GD), Thr87, 89-92 (NVST), 107-115 (KHGNRSVSS), and Ser119. Gly79 is an anthranilate binding site. Ser91 is a Mg(2+) binding site. Residue Asn110 coordinates anthranilate. Arg165 serves as a coordination point for anthranilate. Residues Asp223 and Glu224 each coordinate Mg(2+).

The protein belongs to the anthranilate phosphoribosyltransferase family. Homodimer. Requires Mg(2+) as cofactor.

The enzyme catalyses N-(5-phospho-beta-D-ribosyl)anthranilate + diphosphate = 5-phospho-alpha-D-ribose 1-diphosphate + anthranilate. It participates in amino-acid biosynthesis; L-tryptophan biosynthesis; L-tryptophan from chorismate: step 2/5. In terms of biological role, catalyzes the transfer of the phosphoribosyl group of 5-phosphorylribose-1-pyrophosphate (PRPP) to anthranilate to yield N-(5'-phosphoribosyl)-anthranilate (PRA). The chain is Anthranilate phosphoribosyltransferase from Aeromonas hydrophila subsp. hydrophila (strain ATCC 7966 / DSM 30187 / BCRC 13018 / CCUG 14551 / JCM 1027 / KCTC 2358 / NCIMB 9240 / NCTC 8049).